Reading from the N-terminus, the 331-residue chain is CRISPR-associated endonuclease Cas1 1 (331 aa).

Glu161, His226, and Glu241 together coordinate Mn(2+).

This sequence belongs to the CRISPR-associated endonuclease Cas1 family. As to quaternary structure, homodimer, forms a heterotetramer with a Cas2 homodimer. Requires Mg(2+) as cofactor. Mn(2+) serves as cofactor.

Its function is as follows. CRISPR (clustered regularly interspaced short palindromic repeat), is an adaptive immune system that provides protection against mobile genetic elements (viruses, transposable elements and conjugative plasmids). CRISPR clusters contain spacers, sequences complementary to antecedent mobile elements, and target invading nucleic acids. CRISPR clusters are transcribed and processed into CRISPR RNA (crRNA). Acts as a dsDNA endonuclease. Involved in the integration of spacer DNA into the CRISPR cassette. The chain is CRISPR-associated endonuclease Cas1 1 from Methanospirillum hungatei JF-1 (strain ATCC 27890 / DSM 864 / NBRC 100397 / JF-1).